Consider the following 301-residue polypeptide: MPT51 antigen (301 aa).

Residues Met-1–Ala-36 form the signal peptide.

The protein belongs to the mycobacterial A85 antigen family. As to quaternary structure, homodimer.

It localises to the secreted. In terms of biological role, may have a role in host tissue attachment, whereby ligands may include the serum protein fibronectin and small sugars. The protein is MPT51 antigen (mpt51) of Mycobacterium leprae (strain TN).